The chain runs to 495 residues: ESX-2 secretion system ATPase EccB2 (495 aa).

A helical transmembrane segment spans residues 43–63; the sequence is LALSMVLVAIAAGWMMLLNVL.

Belongs to the EccB family. As to quaternary structure, part of the ESX-2 / type VII secretion system (T7SS), which is composed of cytosolic and membrane components.

Its subcellular location is the cell membrane. An ATPase. This is ESX-2 secretion system ATPase EccB2 (eccB2) from Mycobacterium tuberculosis (strain CDC 1551 / Oshkosh).